A 337-amino-acid polypeptide reads, in one-letter code: tRNA N6-adenosine threonylcarbamoyltransferase (337 aa).

Positions 111 and 115 each coordinate Fe cation. Substrate contacts are provided by residues 134–138 (LVSGG), Asp167, Gly180, and Asn272. Asp300 contacts Fe cation.

Belongs to the KAE1 / TsaD family. It depends on Fe(2+) as a cofactor.

The protein localises to the cytoplasm. The catalysed reaction is L-threonylcarbamoyladenylate + adenosine(37) in tRNA = N(6)-L-threonylcarbamoyladenosine(37) in tRNA + AMP + H(+). In terms of biological role, required for the formation of a threonylcarbamoyl group on adenosine at position 37 (t(6)A37) in tRNAs that read codons beginning with adenine. Is involved in the transfer of the threonylcarbamoyl moiety of threonylcarbamoyl-AMP (TC-AMP) to the N6 group of A37, together with TsaE and TsaB. TsaD likely plays a direct catalytic role in this reaction. The protein is tRNA N6-adenosine threonylcarbamoyltransferase of Salmonella agona (strain SL483).